A 177-amino-acid chain; its full sequence is MTTATTNPSTYPNAMAVARYVGISASKARRVIDLVRGKSVEEALDILRWAPQQASEPVAKVIASAAANAQNNEGLDPSTLVVATIHADEGPTAKRIRPRAQGRAFRIRKRTSHITVIVESRPSREGRRGGAGESAGGARARRAQGSKAAAAKKAPASSSTKAATTTEASEEAKGGSQ.

The disordered stretch occupies residues 118 to 177 (VESRPSREGRRGGAGESAGGARARRAQGSKAAAAKKAPASSSTKAATTTEASEEAKGGSQ). Positions 121–130 (RPSREGRRGG) are enriched in basic and acidic residues. Low complexity predominate over residues 145–167 (GSKAAAAKKAPASSSTKAATTTE).

The protein belongs to the universal ribosomal protein uL22 family. In terms of assembly, part of the 50S ribosomal subunit.

This protein binds specifically to 23S rRNA; its binding is stimulated by other ribosomal proteins, e.g. L4, L17, and L20. It is important during the early stages of 50S assembly. It makes multiple contacts with different domains of the 23S rRNA in the assembled 50S subunit and ribosome. In terms of biological role, the globular domain of the protein is located near the polypeptide exit tunnel on the outside of the subunit, while an extended beta-hairpin is found that lines the wall of the exit tunnel in the center of the 70S ribosome. This chain is Large ribosomal subunit protein uL22, found in Mycobacterium sp. (strain JLS).